A 285-amino-acid chain; its full sequence is Protoheme IX farnesyltransferase (285 aa).

9 helical membrane-spanning segments follow: residues 8-28 (ITKP…FLFA), 36-56 (YVLF…ACVF), 80-100 (LLPV…GLSI), 107-127 (FISM…YTMF), 133-153 (FYST…GYTA), 163-183 (ILLF…ISIM), 209-229 (IFFY…LGYL), 232-252 (NFLL…YSNI), and 265-285 (FYFS…DVFF).

It belongs to the UbiA prenyltransferase family. Protoheme IX farnesyltransferase subfamily.

It localises to the cell membrane. The enzyme catalyses heme b + (2E,6E)-farnesyl diphosphate + H2O = Fe(II)-heme o + diphosphate. It participates in porphyrin-containing compound metabolism; heme O biosynthesis; heme O from protoheme: step 1/1. Functionally, converts heme B (protoheme IX) to heme O by substitution of the vinyl group on carbon 2 of heme B porphyrin ring with a hydroxyethyl farnesyl side group. This is Protoheme IX farnesyltransferase from Buchnera aphidicola subsp. Acyrthosiphon pisum (strain Tuc7).